A 122-amino-acid polypeptide reads, in one-letter code: Heat-labile enterotoxin IIB, B chain (122 aa).

Residues 1–23 form the signal peptide; it reads MSFKKIIKAFVIMAALVSVQAHA. Cysteine 33 and cysteine 104 are disulfide-bonded.

As to quaternary structure, heterohexamer of one A chain and of five B chains.

The biological activity of the toxin is produced by the A chain, which activates intracellular adenyl cyclase. In Escherichia coli, this protein is Heat-labile enterotoxin IIB, B chain.